The primary structure comprises 132 residues: Large ribosomal subunit protein uL14 (132 aa).

The protein belongs to the universal ribosomal protein uL14 family. In terms of assembly, part of the 50S ribosomal subunit. Forms a cluster with proteins L3 and L24e, part of which may contact the 16S rRNA in 2 intersubunit bridges.

In terms of biological role, binds to 23S rRNA. Forms part of two intersubunit bridges in the 70S ribosome. This chain is Large ribosomal subunit protein uL14, found in Methanothrix thermoacetophila (strain DSM 6194 / JCM 14653 / NBRC 101360 / PT) (Methanosaeta thermophila).